The chain runs to 337 residues: Phenylalanine--tRNA ligase alpha subunit (337 aa).

Glu-252 is a Mg(2+) binding site.

Belongs to the class-II aminoacyl-tRNA synthetase family. Phe-tRNA synthetase alpha subunit type 1 subfamily. As to quaternary structure, tetramer of two alpha and two beta subunits. The cofactor is Mg(2+).

Its subcellular location is the cytoplasm. The enzyme catalyses tRNA(Phe) + L-phenylalanine + ATP = L-phenylalanyl-tRNA(Phe) + AMP + diphosphate + H(+). This chain is Phenylalanine--tRNA ligase alpha subunit, found in Francisella tularensis subsp. mediasiatica (strain FSC147).